A 234-amino-acid polypeptide reads, in one-letter code: 1-(5-phosphoribosyl)-5-[(5-phosphoribosylamino)methylideneamino] imidazole-4-carboxamide isomerase (234 aa).

The Proton acceptor role is filled by Asp-9. Asp-131 functions as the Proton donor in the catalytic mechanism.

It belongs to the HisA/HisF family.

Its subcellular location is the cytoplasm. The catalysed reaction is 1-(5-phospho-beta-D-ribosyl)-5-[(5-phospho-beta-D-ribosylamino)methylideneamino]imidazole-4-carboxamide = 5-[(5-phospho-1-deoxy-D-ribulos-1-ylimino)methylamino]-1-(5-phospho-beta-D-ribosyl)imidazole-4-carboxamide. It participates in amino-acid biosynthesis; L-histidine biosynthesis; L-histidine from 5-phospho-alpha-D-ribose 1-diphosphate: step 4/9. This Staphylococcus aureus (strain MRSA252) protein is 1-(5-phosphoribosyl)-5-[(5-phosphoribosylamino)methylideneamino] imidazole-4-carboxamide isomerase.